Here is a 1250-residue protein sequence, read N- to C-terminus: DNA-directed RNA polymerase subunit beta'' (1250 aa).

Zn(2+) is bound by residues Cys224, Cys314, Cys321, and Cys324.

This sequence belongs to the RNA polymerase beta' chain family. RpoC2 subfamily. As to quaternary structure, in plastids the minimal PEP RNA polymerase catalytic core is composed of four subunits: alpha, beta, beta', and beta''. When a (nuclear-encoded) sigma factor is associated with the core the holoenzyme is formed, which can initiate transcription. It depends on Zn(2+) as a cofactor.

Its subcellular location is the plastid. The protein localises to the chloroplast. It catalyses the reaction RNA(n) + a ribonucleoside 5'-triphosphate = RNA(n+1) + diphosphate. DNA-dependent RNA polymerase catalyzes the transcription of DNA into RNA using the four ribonucleoside triphosphates as substrates. The polypeptide is DNA-directed RNA polymerase subunit beta'' (Staurastrum punctulatum (Green alga)).